Here is a 271-residue protein sequence, read N- to C-terminus: Imidazole glycerol phosphate synthase subunit HisF (271 aa).

Catalysis depends on residues Asp12 and Asp136.

Belongs to the HisA/HisF family. As to quaternary structure, heterodimer of HisH and HisF.

The protein resides in the cytoplasm. The catalysed reaction is 5-[(5-phospho-1-deoxy-D-ribulos-1-ylimino)methylamino]-1-(5-phospho-beta-D-ribosyl)imidazole-4-carboxamide + L-glutamine = D-erythro-1-(imidazol-4-yl)glycerol 3-phosphate + 5-amino-1-(5-phospho-beta-D-ribosyl)imidazole-4-carboxamide + L-glutamate + H(+). It functions in the pathway amino-acid biosynthesis; L-histidine biosynthesis; L-histidine from 5-phospho-alpha-D-ribose 1-diphosphate: step 5/9. Functionally, IGPS catalyzes the conversion of PRFAR and glutamine to IGP, AICAR and glutamate. The HisF subunit catalyzes the cyclization activity that produces IGP and AICAR from PRFAR using the ammonia provided by the HisH subunit. This is Imidazole glycerol phosphate synthase subunit HisF from Natronomonas pharaonis (strain ATCC 35678 / DSM 2160 / CIP 103997 / JCM 8858 / NBRC 14720 / NCIMB 2260 / Gabara) (Halobacterium pharaonis).